Here is a 135-residue protein sequence, read N- to C-terminus: S-protein homolog 7 (135 aa).

The first 20 residues, Met-1–Gly-20, serve as a signal peptide directing secretion.

This sequence belongs to the plant self-incompatibility (S1) protein family.

It is found in the secreted. This chain is S-protein homolog 7, found in Arabidopsis thaliana (Mouse-ear cress).